We begin with the raw amino-acid sequence, 315 residues long: Putative carboxypeptidase RC0549 (315 aa).

Ser-125 functions as the Nucleophile in the catalytic mechanism. Catalysis depends on charge relay system residues Glu-225 and His-288.

This sequence belongs to the peptidase S66 family.

The polypeptide is Putative carboxypeptidase RC0549 (Rickettsia conorii (strain ATCC VR-613 / Malish 7)).